The sequence spans 398 residues: RNA-binding protein rnc1 (398 aa).

Residues 40-78 (KVSIPTPKPSTPLSTLTNGSTIQQSMTNQPEPTSQVPPI) are disordered. Threonine 50 is subject to Phosphothreonine. The span at 57–76 (NGSTIQQSMTNQPEPTSQVP) shows a compositional bias: polar residues. KH domains follow at residues 93-157 (QLTL…YRFI) and 178-243 (PRKL…IWEI). Low complexity predominate over residues 274–290 (ASTASPQQVSPPAAPST). The disordered stretch occupies residues 274-295 (ASTASPQQVSPPAAPSTTSGEA). In terms of domain architecture, KH 3 spans 320-385 (KVTQNISIPA…EENEKALFLL (66 aa)).

Post-translationally, phosphorylated by pmk1. Phosphorylation causes enhancement of the RNA-binding activity.

The protein localises to the cytoplasm. Functionally, binds and stabilizes pmp1 mRNA and hence acts as a negative regulator of pmk1 signaling. Overexpression suppresses the Cl(-) sensitivity of calcineurin deletion. This chain is RNA-binding protein rnc1, found in Schizosaccharomyces pombe (strain 972 / ATCC 24843) (Fission yeast).